Consider the following 653-residue polypeptide: DNA mismatch repair protein MutL (653 aa).

The interval 368–413 (EVSQVAEPEGKTDITNKKETETKEKAEKKENKQEEKEEKTSAPEYV) is disordered. Positions 375–408 (PEGKTDITNKKETETKEKAEKKENKQEEKEEKTS) are enriched in basic and acidic residues.

It belongs to the DNA mismatch repair MutL/HexB family.

Its function is as follows. This protein is involved in the repair of mismatches in DNA. It is required for dam-dependent methyl-directed DNA mismatch repair. May act as a 'molecular matchmaker', a protein that promotes the formation of a stable complex between two or more DNA-binding proteins in an ATP-dependent manner without itself being part of a final effector complex. This chain is DNA mismatch repair protein MutL, found in Lactobacillus delbrueckii subsp. bulgaricus (strain ATCC 11842 / DSM 20081 / BCRC 10696 / JCM 1002 / NBRC 13953 / NCIMB 11778 / NCTC 12712 / WDCM 00102 / Lb 14).